The following is a 710-amino-acid chain: Polyribonucleotide nucleotidyltransferase (710 aa).

Residues Asp-489 and Asp-495 each contribute to the Mg(2+) site. Residues 556 to 615 (PKIDTIKIDVDKIKVVIGKGGETIDKIIAETGVKIDIDDEGNVSIYSSDQAAIDRTKEII) form the KH domain. Positions 625–693 (GEVYHAKVIR…EKGRVDASMK (69 aa)) constitute an S1 motif domain. The tract at residues 691 to 710 (SMKALIPRPPKPEKKEEKHD) is disordered. The segment covering 700–710 (PKPEKKEEKHD) has biased composition (basic and acidic residues).

The protein belongs to the polyribonucleotide nucleotidyltransferase family. Mg(2+) is required as a cofactor.

It is found in the cytoplasm. It carries out the reaction RNA(n+1) + phosphate = RNA(n) + a ribonucleoside 5'-diphosphate. In terms of biological role, involved in mRNA degradation. Catalyzes the phosphorolysis of single-stranded polyribonucleotides processively in the 3'- to 5'-direction. This is Polyribonucleotide nucleotidyltransferase from Streptococcus pyogenes serotype M4 (strain MGAS10750).